The primary structure comprises 1157 residues: Hephaestin (1157 aa).

A signal peptide spans 1–18; sequence MKAGHLLWALLLMHSLWS. Residues 19–1109 lie on the Extracellular side of the membrane; that stretch reads IPTDGAIRNY…PIKDVEILSS (1091 aa). Plastocyanin-like domains are found at residues 24–206, 218–366, 370–559, 569–717, 730–902, and 910–1066; these read AIRN…LITC, QRKD…VDSC, PPVD…LLVC, KQKG…VSQC, ASRV…LVIC, and NGGR…SHEE. Asn49 and Asn54 each carry an N-linked (GlcNAc...) asparagine glycan. Na(+) is bound by residues Gly70 and Tyr73. Cu(2+) is bound by residues His126 and His128. An O2-binding site is contributed by His126. Lys134, Asp152, and Asp153 together coordinate Ca(2+). Asn164 is a glycosylation site (N-linked (GlcNAc...) asparagine). Residues Cys180 and Cys206 are joined by a disulfide bond. Cu(2+) contacts are provided by His186 and His188. His186 lines the O2 pocket. Asn236 is a glycosylation site (N-linked (GlcNAc...) asparagine). Ser265 serves as a coordination point for Na(+). The cysteines at positions 285 and 366 are disulfide-linked. Cu(2+) is bound by residues His304, Cys347, and His352. Na(+) is bound by residues Tyr416, Gly425, and Tyr428. Cys533 and Cys559 are joined by a disulfide. The N-linked (GlcNAc...) asparagine glycan is linked to Asn587. Position 616 (Ser616) interacts with Na(+). Residues Cys636 and Cys717 are joined by a disulfide bond. Cu(2+) contacts are provided by His655, Cys698, His703, and Met708. 2 N-linked (GlcNAc...) asparagine glycosylation sites follow: Asn713 and Asn757. Residues Phe768 and Gly777 each contribute to the Na(+) site. Residues Cys876 and Cys902 are joined by a disulfide bond. Residue Asn930 is glycosylated (N-linked (GlcNAc...) asparagine). His999, His1002, His1004, His1044, Cys1045, His1046, His1050, and Met1055 together coordinate Cu(2+). O2 is bound by residues His1002 and His1004. Residue His1046 coordinates O2. The helical transmembrane segment at 1110 to 1130 threads the bilayer; that stretch reads ALIAICVLLLLIALALGGVVW. The Cytoplasmic segment spans residues 1131 to 1157; the sequence is YQHRQRKLRRNRRSILDDSFKLLSLKQ. Residues Ser1144, Ser1149, and Ser1154 each carry the phosphoserine modification.

This sequence belongs to the multicopper oxidase family. Part of a complex composed of SLC40A1/ferroportin, TF/transferrin and HEPH/hephaestin that transfers iron from cells to transferrin. The cofactor is Cu cation.

The protein localises to the basolateral cell membrane. The enzyme catalyses 4 Fe(2+) + O2 + 4 H(+) = 4 Fe(3+) + 2 H2O. Plasma membrane ferroxidase that mediates the extracellular conversion of ferrous/Fe(2+) iron into its ferric/Fe(3+) form. Couples ferroportin which specifically exports ferrous/Fe(2+) iron from cells to transferrin that only binds and shuttles extracellular ferric/Fe(3+) iron throughout the body. By helping iron transfer from cells to blood mainly contributes to dietary iron absorption by the intestinal epithelium and more generally regulates iron levels in the body. The chain is Hephaestin from Mus musculus (Mouse).